A 244-amino-acid polypeptide reads, in one-letter code: Mannose-binding protein C (244 aa).

Positions 1-18 (MSIFTSFLLLCVVTVVYA) are cleaved as a signal peptide. The 59-residue stretch at 38–96 (GLNGFPGKDGRDGAKGEKGEPGQGLRGLQGPPGKVGPTGPPGNPGLKGAVGPKGDRGDR) folds into the Collagen-like domain. The disordered stretch occupies residues 40–101 (NGFPGKDGRD…DRGDRAEFDT (62 aa)). Pro-43 carries the post-translational modification 4-hydroxyproline. Residues 45 to 57 (KDGRDGAKGEKGE) are compositionally biased toward basic and acidic residues. Residues Pro-58, Pro-69, Pro-78, and Pro-81 each carry the 4-hydroxyproline modification. The segment covering 65–74 (LQGPPGKVGP) has biased composition (low complexity). The segment covering 90–99 (KGDRGDRAEF) has biased composition (basic and acidic residues). Residues 108-126 (IAALRSELRALRNWVLFSL) adopt a coiled-coil conformation. Residues 129 to 241 (KVGKKYFVSS…CSDSFLAICE (113 aa)) form the C-type lectin domain. 2 disulfides stabilise this stretch: Cys-151–Cys-240 and Cys-218–Cys-232. N-linked (GlcNAc...) asparagine glycosylation is present at Asn-210.

Oligomeric complex of 3 or more homotrimers. Interacts with MASP1 and MASP2. Interacts with MEP1A and MEP1B and may inhibit their catalytic activity. In terms of processing, hydroxylation on proline residues within the sequence motif, GXPG, is most likely to be 4-hydroxy as this fits the requirement for 4-hydroxylation in vertebrates.

The protein resides in the secreted. In terms of biological role, calcium-dependent lectin involved in innate immune defense. Binds mannose, fucose and N-acetylglucosamine on different microorganisms and activates the lectin complement pathway. Binds to late apoptotic cells, as well as to apoptotic blebs and to necrotic cells, but not to early apoptotic cells, facilitating their uptake by macrophages. In Mus musculus (Mouse), this protein is Mannose-binding protein C (Mbl2).